Here is a 123-residue protein sequence, read N- to C-terminus: Protein HesB, heterocyst (123 aa).

It belongs to the HesB/IscA family.

May be required for efficient nitrogen fixation. The polypeptide is Protein HesB, heterocyst (hesB1) (Trichormus variabilis (strain ATCC 29413 / PCC 7937) (Anabaena variabilis)).